The primary structure comprises 27 residues: Caerulein precursor fragment R8 (27 aa).

In terms of tissue distribution, expressed by the skin glands.

It is found in the secreted. Functionally, antimicrobial peptide. This chain is Caerulein precursor fragment R8, found in Xenopus ruwenzoriensis (Uganda clawed frog).